The chain runs to 557 residues: MDDIDNIILHSLRQIDCDLDEDLQGLEQFTPAVLVRTVSKCLLLIDPSLDLPQTLPPGMAQRFTVTARLAEACTAVGYRRDIGYQTFLYSNVAEVRRVFMFLIEQLPKDSTDAADPEAPLDRVTDLENRILDSMRQQLRGRKDPATPLDLRNATLGWAGSRSRANIPFVTQSDVTAGTGLRGRKWLQTILICVFFLALAQKLSNTGYAGAGFGRRKRMKWIGGRQTTDDSILKLQAYYAQNKAQCPLAEELEEAAETPDRLGQLDALEQEIAAIETAISESRRQRRELHAKRRTVAESAQAVESVAEKLKEEKKIKERTHILLENPEVNVAKLESIIAAAGEKMKKLQSQWEAHRAPLVATLEEHQAKNSDQIESARHKSEEVIVDLQTKSALHARLVQEYERMGRTVSRTAYTSRILEIIGNIRKQKTDIDKILHDTRSLQKEINSITGQLDRQFTVTDDLIFRNAKRDEYCKRAYILLVALHTECSELTALVQETGTVKREVRELEDQIENEKDRNVVTNLAQIGQDLEEMQRESRRLEEAIQQLELSAGRNGTK.

Coiled-coil stretches lie at residues Arg260–Gln350 and Glu489–Asn554.

It belongs to the CCDC22 family.

The polypeptide is Coiled-coil domain-containing protein 22 homolog (Anopheles gambiae (African malaria mosquito)).